We begin with the raw amino-acid sequence, 84 residues long: Cell division topological specificity factor (84 aa).

It belongs to the MinE family.

Functionally, prevents the cell division inhibition by proteins MinC and MinD at internal division sites while permitting inhibition at polar sites. This ensures cell division at the proper site by restricting the formation of a division septum at the midpoint of the long axis of the cell. The protein is Cell division topological specificity factor of Pseudomonas aeruginosa (strain LESB58).